Here is a 428-residue protein sequence, read N- to C-terminus: uncharacterized protein (428 aa).

12 consecutive transmembrane segments (helical) span residues Leu-14 to Phe-34, Tyr-55 to Ala-75, Phe-84 to Ser-104, Trp-107 to Phe-127, Phe-149 to Leu-169, Ala-182 to Ile-202, Leu-238 to Met-258, Ser-272 to Gly-292, Thr-302 to Glu-322, Thr-324 to Leu-344, Phe-361 to Ala-381, and Thr-392 to Pro-412.

It belongs to the major facilitator superfamily.

The protein localises to the cell membrane. This is an uncharacterized protein from Bacillus subtilis (strain 168).